The chain runs to 639 residues: Chaperone protein DnaK (639 aa).

Threonine 198 bears the Phosphothreonine; by autocatalysis mark. Residues 603–618 (AKAQTQGGAQEGAAKQ) show a composition bias toward low complexity. Residues 603-639 (AKAQTQGGAQEGAAKQSNATADDVVDAEFEEVKDDKK) are disordered. The span at 625-639 (DVVDAEFEEVKDDKK) shows a compositional bias: acidic residues.

The protein belongs to the heat shock protein 70 family.

In terms of biological role, acts as a chaperone. The protein is Chaperone protein DnaK of Shewanella sp. (strain MR-7).